A 219-amino-acid polypeptide reads, in one-letter code: MVDLKTKAFDISQNFTISLDGPAASGKGTIGLILAKKFSLKYFQSSIVYRQLAFDCISQKIDVTDIDAVIALSKELKLDNNFDLENENIGNIASQIAVISEIRNNLNKYLISLVKTTPRMIMEGRDIGTVVAPDADLKIFITANPQIRAERRYKQLQAKGKTCILDEILRQIILRDKRDKERKAAPLLPASDALIIDTSKLSAMEVVEEVTNYIKNKIT.

21-29 (GPAASGKGT) lines the ATP pocket.

Belongs to the cytidylate kinase family. Type 1 subfamily.

Its subcellular location is the cytoplasm. It carries out the reaction CMP + ATP = CDP + ADP. The enzyme catalyses dCMP + ATP = dCDP + ADP. The sequence is that of Cytidylate kinase from Rickettsia conorii (strain ATCC VR-613 / Malish 7).